The chain runs to 251 residues: Hydroxyacylglutathione hydrolase (251 aa).

7 residues coordinate Zn(2+): His-53, His-55, Asp-57, His-58, His-110, Asp-127, and His-165.

This sequence belongs to the metallo-beta-lactamase superfamily. Glyoxalase II family. As to quaternary structure, monomer. Zn(2+) serves as cofactor.

The enzyme catalyses an S-(2-hydroxyacyl)glutathione + H2O = a 2-hydroxy carboxylate + glutathione + H(+). It functions in the pathway secondary metabolite metabolism; methylglyoxal degradation; (R)-lactate from methylglyoxal: step 2/2. In terms of biological role, thiolesterase that catalyzes the hydrolysis of S-D-lactoyl-glutathione to form glutathione and D-lactic acid. The sequence is that of Hydroxyacylglutathione hydrolase from Citrobacter koseri (strain ATCC BAA-895 / CDC 4225-83 / SGSC4696).